Reading from the N-terminus, the 616-residue chain is KIF-binding protein (616 aa).

The segment at 52 to 78 (EEEEESEAEGKEERRDGPESGGRRGES) is disordered. Residues 59–78 (AEGKEERRDGPESGGRRGES) show a composition bias toward basic and acidic residues.

It belongs to the KIF-binding protein family.

The protein resides in the cytoplasm. Its subcellular location is the cytoskeleton. Activator of KIF1B plus-end-directed microtubule motor activity. Required for organization of axonal microtubules, and axonal outgrowth and maintenance during peripheral and central nervous system development. The protein is KIF-binding protein of Xenopus tropicalis (Western clawed frog).